We begin with the raw amino-acid sequence, 1312 residues long: Rho GTPase-activating protein gacG (1312 aa).

Disordered regions lie at residues Val-52–Gln-74, Ser-111–Asp-158, Ile-314–Phe-519, Asn-762–Gly-831, Asn-1185–Val-1230, and Thr-1282–Glu-1312. 2 stretches are compositionally biased toward low complexity: residues Glu-53–Asn-67 and Ser-111–Arg-146. A compositionally biased stretch (polar residues) spans Asn-147 to Asp-158. Composition is skewed to low complexity over residues Thr-328 to Ser-355, His-373 to Ser-397, and Leu-414 to Asn-436. A compositionally biased stretch (polar residues) spans Glu-437–Arg-449. Low complexity predominate over residues Ser-479 to Gln-507. Composition is skewed to polar residues over residues His-508–Asn-518 and Ser-763–Ala-776. The span at Asn-792 to Asn-816 shows a compositional bias: low complexity. The Rho-GAP domain occupies Ser-1030–Asn-1212. The segment covering His-1196–Arg-1210 has biased composition (basic residues). Low complexity-rich tracts occupy residues Asn-1213–Ser-1222 and Thr-1282–Ser-1305.

Its subcellular location is the cytoplasm. In terms of biological role, rho GTPase-activating protein involved in the signal transduction pathway. The protein is Rho GTPase-activating protein gacG (gacG) of Dictyostelium discoideum (Social amoeba).